We begin with the raw amino-acid sequence, 318 residues long: Type II methyltransferase M.HaeII (318 aa).

The 301-residue stretch at 4-304 (YKTIDLFAGI…GSMINSLNMA (301 aa)) folds into the SAM-dependent MTase C5-type domain. Residue cysteine 73 is part of the active site.

It belongs to the class I-like SAM-binding methyltransferase superfamily. C5-methyltransferase family.

It carries out the reaction a 2'-deoxycytidine in DNA + S-adenosyl-L-methionine = a 5-methyl-2'-deoxycytidine in DNA + S-adenosyl-L-homocysteine + H(+). Functionally, a methylase, recognizes the double-stranded sequence 5'-RGCGCY-3', methylates C-? on both strands, and protects the DNA from cleavage by the HaeII endonuclease. The polypeptide is Type II methyltransferase M.HaeII (haeIIM) (Haemophilus aegyptius).